We begin with the raw amino-acid sequence, 466 residues long: ATP synthase subunit beta (466 aa).

Position 156–163 (156–163 (GGAGVGKT)) interacts with ATP.

Belongs to the ATPase alpha/beta chains family. In terms of assembly, F-type ATPases have 2 components, CF(1) - the catalytic core - and CF(0) - the membrane proton channel. CF(1) has five subunits: alpha(3), beta(3), gamma(1), delta(1), epsilon(1). CF(0) has three main subunits: a(1), b(2) and c(9-12). The alpha and beta chains form an alternating ring which encloses part of the gamma chain. CF(1) is attached to CF(0) by a central stalk formed by the gamma and epsilon chains, while a peripheral stalk is formed by the delta and b chains.

The protein localises to the cell inner membrane. It catalyses the reaction ATP + H2O + 4 H(+)(in) = ADP + phosphate + 5 H(+)(out). In terms of biological role, produces ATP from ADP in the presence of a proton gradient across the membrane. The catalytic sites are hosted primarily by the beta subunits. The protein is ATP synthase subunit beta of Polynucleobacter necessarius subsp. necessarius (strain STIR1).